Consider the following 310-residue polypeptide: Cysteine synthase (310 aa).

Position 46 is an N6-(pyridoxal phosphate)lysine (Lys-46). Pyridoxal 5'-phosphate-binding positions include Asn-76, 180-184, and Ser-268; that span reads GTGGT.

Belongs to the cysteine synthase/cystathionine beta-synthase family. As to quaternary structure, homodimer. The cofactor is pyridoxal 5'-phosphate.

It catalyses the reaction O-acetyl-L-serine + hydrogen sulfide = L-cysteine + acetate. It participates in amino-acid biosynthesis; L-cysteine biosynthesis; L-cysteine from L-serine: step 2/2. The sequence is that of Cysteine synthase (cysK) from Staphylococcus epidermidis (strain ATCC 35984 / DSM 28319 / BCRC 17069 / CCUG 31568 / BM 3577 / RP62A).